The primary structure comprises 182 residues: Probable inosine/xanthosine triphosphatase (182 aa).

Positions 42 and 69 each coordinate Mg(2+).

It belongs to the YjjX NTPase family. In terms of assembly, homodimer. Mg(2+) is required as a cofactor. Requires Mn(2+) as cofactor.

It catalyses the reaction XTP + H2O = XDP + phosphate + H(+). It carries out the reaction ITP + H2O = IDP + phosphate + H(+). Its function is as follows. Phosphatase that hydrolyzes non-canonical purine nucleotides such as XTP and ITP to their respective diphosphate derivatives. Probably excludes non-canonical purines from DNA/RNA precursor pool, thus preventing their incorporation into DNA/RNA and avoiding chromosomal lesions. The sequence is that of Probable inosine/xanthosine triphosphatase from Methanothermobacter thermautotrophicus (strain ATCC 29096 / DSM 1053 / JCM 10044 / NBRC 100330 / Delta H) (Methanobacterium thermoautotrophicum).